The sequence spans 261 residues: Aromatic peroxygenase (261 aa).

C36 provides a ligand contact to heme. N-linked (GlcNAc...) asparagine glycans are attached at residues N100, N137, N141, and N220.

The protein belongs to the chloroperoxidase family. The cofactor is heme b. Post-translationally, N-glycosylated.

In terms of biological role, aromatic peroxidase that oxidizes aryl alcohols into the corresponding aldehydes and then into the corresponding benzoic acids. Catalyzes the regioselective peroxide-dependent hydroxylation of naphthalene to 1-naphthol and to a far lesser extent 2-naphthol via a naphthalene 1,2-oxide intermediate. Halogenates phenol to 2-bromophenol and 4-bromophenol. Oxidizes the sulfur-containing heterocycle dibenzothiophene to yield sulfoxidation products, and trace amounts of ring-hydroxylation products. The chain is Aromatic peroxygenase from Coprinellus radians (Coprophilous mushroom).